The sequence spans 432 residues: Nuclear pore complex-interacting protein family member B8 (432 aa).

Disordered regions lie at residues 260 to 280 (RMGR…NSLS) and 353 to 420 (SPLP…LRTR). The segment covering 270-280 (QQHSITDNSLS) has biased composition (polar residues). Residues 374-402 (EVEKPPKPKRWRVDEVEQSPKPKRQREAE) show a composition bias toward basic and acidic residues. Residues 408–420 (KPKRRRLSKLRTR) show a composition bias toward basic residues.

This sequence belongs to the NPIP family.

This chain is Nuclear pore complex-interacting protein family member B8 (NPIPB8), found in Homo sapiens (Human).